Here is a 461-residue protein sequence, read N- to C-terminus: MLKKEINVVILAAGKGTRMQSSYPKVLHKLGGKTILEHVINIAKSVKPKKIILVYNNKEKEIKSKISDTSIDWVIQKEQKGTGDAILKASKKFSDKDDIVVLYGDMPYISIESIKKLFTSKKQSDISLLTAYVKNPDGYGRVFKKNGKVIKIIEEQDANFHEKKIKEVYSGTFIANGKDLKRWLNQINNKNIKKEFYATDIVHFANLENSTIKTVQVLNCKEILGVNNKLQLSILEKIFRKKQVNDLLLSGVTLKDPNHFILRGILKHGKNIEIDTGVILEGNIILGNNIKIGVGSVIKNSFIDDQTEIKEYTIIENVKIGKKCIIGPFAHLRPKTVLDDQIHVGNFVEIKDSIIKKESKIKHLSYFGNSEIGSQVNIGAGSITCNYDGVNKFKTIIGDNVLIGANTKLIAPIKITKNATIAAGTTLTQDVNTPCLIYNNKEQKQKKNWKRPQKIIKKTDQ.

A pyrophosphorylase region spans residues 1-229; the sequence is MLKKEINVVI…CKEILGVNNK (229 aa). UDP-N-acetyl-alpha-D-glucosamine-binding positions include 11 to 14, Lys25, Gln76, 81 to 82, 103 to 105, Gly140, Glu154, and Asn227; these read LAAG, GT, and YGD. Asp105 is a binding site for Mg(2+). Position 227 (Asn227) interacts with Mg(2+). Residues 230–250 are linker; the sequence is LQLSILEKIFRKKQVNDLLLS. The interval 251 to 461 is N-acetyltransferase; that stretch reads GVTLKDPNHF…PQKIIKKTDQ (211 aa). Arg333 and Lys351 together coordinate UDP-N-acetyl-alpha-D-glucosamine. Catalysis depends on His363, which acts as the Proton acceptor. UDP-N-acetyl-alpha-D-glucosamine is bound by residues Tyr366 and Asn377. Residues Ala380, 386-387, and Ala423 each bind acetyl-CoA; that span reads NY.

This sequence in the N-terminal section; belongs to the N-acetylglucosamine-1-phosphate uridyltransferase family. In the C-terminal section; belongs to the transferase hexapeptide repeat family. Homotrimer. Mg(2+) serves as cofactor.

It localises to the cytoplasm. The catalysed reaction is alpha-D-glucosamine 1-phosphate + acetyl-CoA = N-acetyl-alpha-D-glucosamine 1-phosphate + CoA + H(+). It catalyses the reaction N-acetyl-alpha-D-glucosamine 1-phosphate + UTP + H(+) = UDP-N-acetyl-alpha-D-glucosamine + diphosphate. It participates in nucleotide-sugar biosynthesis; UDP-N-acetyl-alpha-D-glucosamine biosynthesis; N-acetyl-alpha-D-glucosamine 1-phosphate from alpha-D-glucosamine 6-phosphate (route II): step 2/2. The protein operates within nucleotide-sugar biosynthesis; UDP-N-acetyl-alpha-D-glucosamine biosynthesis; UDP-N-acetyl-alpha-D-glucosamine from N-acetyl-alpha-D-glucosamine 1-phosphate: step 1/1. It functions in the pathway bacterial outer membrane biogenesis; LPS lipid A biosynthesis. Functionally, catalyzes the last two sequential reactions in the de novo biosynthetic pathway for UDP-N-acetylglucosamine (UDP-GlcNAc). The C-terminal domain catalyzes the transfer of acetyl group from acetyl coenzyme A to glucosamine-1-phosphate (GlcN-1-P) to produce N-acetylglucosamine-1-phosphate (GlcNAc-1-P), which is converted into UDP-GlcNAc by the transfer of uridine 5-monophosphate (from uridine 5-triphosphate), a reaction catalyzed by the N-terminal domain. This Buchnera aphidicola subsp. Schizaphis graminum (strain Sg) protein is Bifunctional protein GlmU.